Reading from the N-terminus, the 336-residue chain is Anthranilate phosphoribosyltransferase (336 aa).

Residues Gly82, 85-86 (GD), Thr90, 92-95 (NIST), 110-118 (KHGNRSVSS), and Ser122 each bind 5-phospho-alpha-D-ribose 1-diphosphate. An anthranilate-binding site is contributed by Gly82. Position 94 (Ser94) interacts with Mg(2+). Asn113 provides a ligand contact to anthranilate. Arg168 lines the anthranilate pocket. Mg(2+) contacts are provided by Asp227 and Glu228.

This sequence belongs to the anthranilate phosphoribosyltransferase family. Homodimer. Mg(2+) serves as cofactor.

The enzyme catalyses N-(5-phospho-beta-D-ribosyl)anthranilate + diphosphate = 5-phospho-alpha-D-ribose 1-diphosphate + anthranilate. It participates in amino-acid biosynthesis; L-tryptophan biosynthesis; L-tryptophan from chorismate: step 2/5. Its function is as follows. Catalyzes the transfer of the phosphoribosyl group of 5-phosphorylribose-1-pyrophosphate (PRPP) to anthranilate to yield N-(5'-phosphoribosyl)-anthranilate (PRA). This Leptospira interrogans serogroup Icterohaemorrhagiae serovar copenhageni (strain Fiocruz L1-130) protein is Anthranilate phosphoribosyltransferase.